The sequence spans 340 residues: NADH-quinone oxidoreductase subunit H (340 aa).

The next 8 helical transmembrane spans lie at 4–24 (TIGILIWIIIKILVIVVPLLL), 78–98 (YLFVIAPLFALVPSLVGWAVI), 113–133 (VLYLFAMSSLGVYGVLIAGWA), 151–171 (VSYEIAMGFALVGVLLAAGSM), 184–204 (MLHWWFIPLLPLFLVFWIAGI), 244–264 (SMILISTFMAILFMGGWLSPF), 273–293 (IFFVVPGFVWLLLKISFFLFV), and 316–336 (VLIPVTIVWLVVTSLMVVAHV).

It belongs to the complex I subunit 1 family. NDH-1 is composed of 14 different subunits. Subunits NuoA, H, J, K, L, M, N constitute the membrane sector of the complex.

The protein localises to the cell inner membrane. It catalyses the reaction a quinone + NADH + 5 H(+)(in) = a quinol + NAD(+) + 4 H(+)(out). NDH-1 shuttles electrons from NADH, via FMN and iron-sulfur (Fe-S) centers, to quinones in the respiratory chain. The immediate electron acceptor for the enzyme in this species is believed to be ubiquinone. Couples the redox reaction to proton translocation (for every two electrons transferred, four hydrogen ions are translocated across the cytoplasmic membrane), and thus conserves the redox energy in a proton gradient. This subunit may bind ubiquinone. The sequence is that of NADH-quinone oxidoreductase subunit H from Legionella pneumophila (strain Paris).